We begin with the raw amino-acid sequence, 309 residues long: Probable manganese-dependent inorganic pyrophosphatase (309 aa).

Residues His-9, Asp-13, Asp-15, Asp-75, His-97, and Asp-149 each contribute to the Mn(2+) site.

It belongs to the PPase class C family. It depends on Mn(2+) as a cofactor.

The protein resides in the cytoplasm. The enzyme catalyses diphosphate + H2O = 2 phosphate + H(+). The sequence is that of Probable manganese-dependent inorganic pyrophosphatase from Staphylococcus saprophyticus subsp. saprophyticus (strain ATCC 15305 / DSM 20229 / NCIMB 8711 / NCTC 7292 / S-41).